Reading from the N-terminus, the 40-residue chain is Hemoglobin subunit alpha-2 (40 aa).

One can recognise a Globin domain in the interval 1 to 40 (VGPHLDDYGGEALHRNFEVYPQTKTYFPHFDASAGSNQLK).

Belongs to the globin family. Heterotetramer of two alpha chains and two beta chains. Red blood cells.

In terms of biological role, involved in oxygen transport from the lung to the various peripheral tissues. This chain is Hemoglobin subunit alpha-2, found in Saara hardwickii (Indian spiny-tailed lizard).